Reading from the N-terminus, the 254-residue chain is UDP-2,3-diacylglucosamine hydrolase (254 aa).

Mn(2+)-binding residues include Asp8, His10, Asp41, Asn79, and His114. Residue 79–80 (NR) participates in substrate binding. Positions 122, 160, 164, 167, and 195 each coordinate substrate. Mn(2+) contacts are provided by His195 and His197.

This sequence belongs to the LpxH family. Mn(2+) serves as cofactor.

It is found in the cell inner membrane. The catalysed reaction is UDP-2-N,3-O-bis[(3R)-3-hydroxytetradecanoyl]-alpha-D-glucosamine + H2O = 2-N,3-O-bis[(3R)-3-hydroxytetradecanoyl]-alpha-D-glucosaminyl 1-phosphate + UMP + 2 H(+). Its pathway is glycolipid biosynthesis; lipid IV(A) biosynthesis; lipid IV(A) from (3R)-3-hydroxytetradecanoyl-[acyl-carrier-protein] and UDP-N-acetyl-alpha-D-glucosamine: step 4/6. In terms of biological role, hydrolyzes the pyrophosphate bond of UDP-2,3-diacylglucosamine to yield 2,3-diacylglucosamine 1-phosphate (lipid X) and UMP by catalyzing the attack of water at the alpha-P atom. Involved in the biosynthesis of lipid A, a phosphorylated glycolipid that anchors the lipopolysaccharide to the outer membrane of the cell. This Aeromonas salmonicida (strain A449) protein is UDP-2,3-diacylglucosamine hydrolase.